The chain runs to 479 residues: Ammonium transporter Rh type C (479 aa).

Topologically, residues 1-9 (MAWNTNLRW) are cytoplasmic. The chain crosses the membrane as a helical span at residues 10–30 (RLPLTCLLLQVVMVILFGVFV). At 31–60 (RYDFEADAHWWSERTHKNLSDVENEFYYRY) the chain is on the extracellular side. The N-linked (GlcNAc...) asparagine glycan is linked to asparagine 48. The helical transmembrane segment at 61–81 (PSFQDVHVMVFVGFGFLMTFL) threads the bilayer. Residues 82-85 (QRYG) are Cytoplasmic-facing. A helical transmembrane segment spans residues 86–106 (FSAVGFNFLLAAFGIQWALLM). Residues 107–123 (QGWFHFLQGRYIVVGVE) lie on the Extracellular side of the membrane. The helical transmembrane segment at 124–144 (NLINADFCVASVCVAFGAVLG) threads the bilayer. Residues 145-148 (KVSP) are Cytoplasmic-facing. A helical membrane pass occupies residues 149–169 (IQLLIMTFFQVTLFAVNEFIL). Topologically, residues 170 to 177 (LNLLKVKD) are extracellular. The helical transmembrane segment at 178–200 (AGGSMTIHTFGAYFGLTVTRILY) threads the bilayer. The Cytoplasmic segment spans residues 201–218 (RRNLEQSKERQNSVYQSD). Residues 219–239 (LFAMIGTLFLWMYWPSFNSAI) form a helical membrane-spanning segment. Over 240–250 (SYHGDSQHRAA) the chain is Extracellular. Residues 251-271 (INTYCSLAACVLTSVAISSAL) form a helical membrane-spanning segment. Topologically, residues 272 to 281 (HKKGKLDMVH) are cytoplasmic. The helical transmembrane segment at 282-302 (IQNATLAGGVAVGTAAEMMLM) threads the bilayer. Residue proline 303 is a topological domain, extracellular. The chain crosses the membrane as a helical span at residues 304–324 (YGALIIGFVCGIISTLGFVYL). Topologically, residues 325–345 (TPFLESRLHIQDTCGINNLHG) are cytoplasmic. A helical membrane pass occupies residues 346-366 (IPGIIGGIVGAVTAASASLEV). Topologically, residues 367-394 (YGKEGLVHSFDFQGFKGDWTARTQGKFQ) are extracellular. The chain crosses the membrane as a helical span at residues 395 to 415 (IYGLLVTLAMALMGGIIVGLI). Topologically, residues 416–479 (LRLPFWGQPS…PMASSVPLVP (64 aa)) are cytoplasmic.

Belongs to the ammonium transporter (TC 2.A.49) family. Rh subfamily. In terms of assembly, homotrimer. N-glycosylated.

The protein localises to the cell membrane. It is found in the apical cell membrane. The catalysed reaction is NH4(+)(in) = NH4(+)(out). It carries out the reaction methylamine(out) = methylamine(in). It catalyses the reaction CO2(out) = CO2(in). In terms of biological role, ammonium transporter involved in the maintenance of acid-base homeostasis. Transports ammonium and its related derivative methylammonium across the plasma membrane of epithelial cells likely contributing to renal transepithelial ammonia transport and ammonia metabolism. Postulated to primarily mediate an electroneutral bidirectional transport of NH3 ammonia species according to a mechanism that implies interaction of an NH4(+) ion with acidic residues of the pore entry followed by dissociation of NH4(+) into NH3 and H(+). As a result NH3 transits through the central pore and is protonated on the extracellular side reforming NH4(+). May act as a CO2 channel providing for renal acid secretion. This Pan troglodytes (Chimpanzee) protein is Ammonium transporter Rh type C (RHCG).